Reading from the N-terminus, the 272-residue chain is Putative phosphoenolpyruvate synthase regulatory protein (272 aa).

151–158 provides a ligand contact to ADP; the sequence is GVSRSGKT.

The protein belongs to the pyruvate, phosphate/water dikinase regulatory protein family. PSRP subfamily.

The enzyme catalyses [pyruvate, water dikinase] + ADP = [pyruvate, water dikinase]-phosphate + AMP + H(+). The catalysed reaction is [pyruvate, water dikinase]-phosphate + phosphate + H(+) = [pyruvate, water dikinase] + diphosphate. Its function is as follows. Bifunctional serine/threonine kinase and phosphorylase involved in the regulation of the phosphoenolpyruvate synthase (PEPS) by catalyzing its phosphorylation/dephosphorylation. This is Putative phosphoenolpyruvate synthase regulatory protein from Desulfotalea psychrophila (strain LSv54 / DSM 12343).